Reading from the N-terminus, the 405-residue chain is Acetyl-CoA decarbonylase/synthase complex subunit delta (405 aa).

It belongs to the CdhD family. In terms of assembly, heterodimer of delta and gamma chains. The ACDS complex is made up of alpha, epsilon, beta, gamma and delta chains with a probable stoichiometry of (alpha(2)epsilon(2))(4)-beta(8)-(gamma(1)delta(1))(8).

Part of a complex that catalyzes the reversible cleavage of acetyl-CoA, allowing autotrophic growth from CO(2). Probably maintains the overall quaternary structure of the ACDS complex. The chain is Acetyl-CoA decarbonylase/synthase complex subunit delta from Methanocaldococcus jannaschii (strain ATCC 43067 / DSM 2661 / JAL-1 / JCM 10045 / NBRC 100440) (Methanococcus jannaschii).